The following is a 196-amino-acid chain: Alpha-crystallin A chain (196 aa).

Met-1 bears the N-acetylmethionine mark. Positions 1–63 are required for complex formation with BFSP1 and BFSP2; it reads MDVTIQHPWF…RTVLDSCISE (63 aa). Gln-6 bears the Deamidated glutamine; partial mark. Ser-45 bears the Phosphoserine mark. Gln-50 bears the Deamidated glutamine; partial mark. Residues 76–185 enclose the sHSP domain; that stretch reads HAGNPENNPI…GHSERAIPVS (110 aa). Lys-93 and Lys-122 each carry N6-acetyllysine. His-123 is a binding site for Zn(2+). Asn-124 carries the deamidated asparagine; partial modification. 2 residues coordinate Zn(2+): Glu-125 and His-130. Ser-145 is subject to Phosphoserine. Gln-170 carries the deamidated glutamine; partial modification. Residues 170–196 form a disordered region; it reads QSGLDAGHSERAIPVSQEEKPSSAPLF. The segment covering 176–190 has biased composition (basic and acidic residues); that stretch reads GHSERAIPVSQEEKP. Position 177 (His-177) interacts with Zn(2+). Ser-185 carries an O-linked (GlcNAc) serine glycan.

The protein belongs to the small heat shock protein (HSP20) family. In terms of assembly, heteromer composed of three CRYAA and one CRYAB subunits. Inter-subunit bridging via zinc ions enhances stability, which is crucial as there is no protein turn over in the lens. Can also form homodimers and homotetramers (dimers of dimers) which serve as the building blocks of homooligomers. Within homooligomers, the zinc-binding motif is created from residues of 3 different molecules. His-123 and Glu-125 from one molecule are ligands of the zinc ion, and His-130 and His-177 residues from additional molecules complete the site with tetrahedral coordination geometry. Part of a complex required for lens intermediate filament formation composed of BFSP1, BFSP2 and CRYAA. In terms of processing, acetylation at Lys-93 may increase chaperone activity. Undergoes age-dependent proteolytical cleavage at the C-terminus.

The protein resides in the cytoplasm. The protein localises to the nucleus. Functionally, contributes to the transparency and refractive index of the lens. Acts as a chaperone, preventing aggregation of various proteins under a wide range of stress conditions. Required for the correct formation of lens intermediate filaments as part of a complex composed of BFSP1, BFSP2 and CRYAA. This Spalax ehrenbergi (Middle East blind mole rat) protein is Alpha-crystallin A chain (CRYAA).